Reading from the N-terminus, the 491-residue chain is Glutamine synthetase (491 aa).

In terms of domain architecture, GS beta-grasp spans 23–111; that stretch reads NNVRQVLCAF…MFGNVYEAWG (89 aa). A GS catalytic domain is found at 119–491; the sequence is PRGYVAKRYE…PWEFMKYFDI (373 aa). Glutamate 143 and glutamate 145 together coordinate Mg(2+). Residue glutamate 225 participates in ATP binding. The Mg(2+) site is built by glutamate 230 and glutamate 238. L-glutamate-binding positions include 282-283 and alanine 283; that span reads NA. Histidine 287 is a Mg(2+) binding site. ATP contacts are provided by residues 289–291 and serine 291; that span reads HQS. Residues arginine 344, glutamate 350, and arginine 362 each contribute to the L-glutamate site. Positions 362 and 367 each coordinate ATP. Glutamate 381 is a Mg(2+) binding site. Arginine 383 contacts L-glutamate.

Belongs to the glutamine synthetase family. In terms of assembly, oligomer of 12 subunits arranged in the form of two hexagons. Mg(2+) serves as cofactor.

The protein localises to the cytoplasm. It carries out the reaction L-glutamate + NH4(+) + ATP = L-glutamine + ADP + phosphate + H(+). Functionally, probably involved in nitrogen metabolism via ammonium assimilation. Catalyzes the ATP-dependent biosynthesis of glutamine from glutamate and ammonia. Beta-glutamate is a much poorer substrate than alpha-glutamate. This chain is Glutamine synthetase, found in Archaeoglobus fulgidus (strain ATCC 49558 / DSM 4304 / JCM 9628 / NBRC 100126 / VC-16).